Consider the following 178-residue polypeptide: Interleukin-10 (178 aa).

An N-terminal signal peptide occupies residues 1-18; it reads MHSSALLCCLVLLTGVRA. Disulfide bonds link C30–C126 and C80–C132. N134 is a glycosylation site (N-linked (GlcNAc...) asparagine).

This sequence belongs to the IL-10 family. As to quaternary structure, homodimer. Interacts with IL10RA and IL10RB.

The protein localises to the secreted. In terms of biological role, major immune regulatory cytokine that acts on many cells of the immune system where it has profound anti-inflammatory functions, limiting excessive tissue disruption caused by inflammation. Mechanistically, IL10 binds to its heterotetrameric receptor comprising IL10RA and IL10RB leading to JAK1 and STAT2-mediated phosphorylation of STAT3. In turn, STAT3 translocates to the nucleus where it drives expression of anti-inflammatory mediators. Targets antigen-presenting cells (APCs) such as macrophages and monocytes and inhibits their release of pro-inflammatory cytokines including granulocyte-macrophage colony-stimulating factor /GM-CSF, granulocyte colony-stimulating factor/G-CSF, IL-1 alpha, IL-1 beta, IL-6, IL-8 and TNF-alpha. Also interferes with antigen presentation by reducing the expression of MHC-class II and co-stimulatory molecules, thereby inhibiting their ability to induce T cell activation. In addition, controls the inflammatory response of macrophages by reprogramming essential metabolic pathways including mTOR signaling. This is Interleukin-10 (IL10) from Macaca fascicularis (Crab-eating macaque).